We begin with the raw amino-acid sequence, 241 residues long: Uridylate kinase (241 aa).

An ATP-binding site is contributed by 15–18 (KLSG). Residues 23-28 (GTEGFG) form an involved in allosteric activation by GTP region. UMP is bound at residue Gly57. ATP-binding residues include Gly58 and Arg62. Residues Asp77 and 138–145 (TGNPFFTT) contribute to the UMP site. ATP contacts are provided by Thr165, Tyr171, and Asp174.

This sequence belongs to the UMP kinase family. In terms of assembly, homohexamer.

Its subcellular location is the cytoplasm. It catalyses the reaction UMP + ATP = UDP + ADP. The protein operates within pyrimidine metabolism; CTP biosynthesis via de novo pathway; UDP from UMP (UMPK route): step 1/1. Allosterically activated by GTP. Inhibited by UTP. Functionally, catalyzes the reversible phosphorylation of UMP to UDP. This is Uridylate kinase from Pectobacterium atrosepticum (strain SCRI 1043 / ATCC BAA-672) (Erwinia carotovora subsp. atroseptica).